A 50-amino-acid polypeptide reads, in one-letter code: Large ribosomal subunit protein bL33 (50 aa).

The protein belongs to the bacterial ribosomal protein bL33 family.

The sequence is that of Large ribosomal subunit protein bL33 from Sulfurovum sp. (strain NBC37-1).